The chain runs to 635 residues: Threonine--tRNA ligase (635 aa).

In terms of domain architecture, TGS spans 1 to 61 (MINISFPDGS…DNDCKLRILT (61 aa)). The catalytic stretch occupies residues 242–533 (DHRKLGRELD…LIEEYAGRFP (292 aa)). 3 residues coordinate Zn(2+): Cys-333, His-384, and His-510.

Belongs to the class-II aminoacyl-tRNA synthetase family. In terms of assembly, homodimer. The cofactor is Zn(2+).

The protein localises to the cytoplasm. The catalysed reaction is tRNA(Thr) + L-threonine + ATP = L-threonyl-tRNA(Thr) + AMP + diphosphate + H(+). Catalyzes the attachment of threonine to tRNA(Thr) in a two-step reaction: L-threonine is first activated by ATP to form Thr-AMP and then transferred to the acceptor end of tRNA(Thr). Also edits incorrectly charged L-seryl-tRNA(Thr). The protein is Threonine--tRNA ligase of Rickettsia peacockii (strain Rustic).